The primary structure comprises 719 residues: B3 domain-containing protein Os03g0120900 (719 aa).

The segment at residues 7–110 is a DNA-binding region (TF-B3); the sequence is HHHFIKVMVG…HFMVLPFGLN (104 aa). Disordered regions lie at residues 328–381 and 412–443; these read RGSF…RSEQ and EEPQ…RNAV. Residues 351-366 show a composition bias toward basic and acidic residues; the sequence is DSAENTLKERSEERQP. Positions 416–430 are enriched in polar residues; the sequence is HNQGENEGNLDQVNN.

The protein resides in the nucleus. This is B3 domain-containing protein Os03g0120900 from Oryza sativa subsp. japonica (Rice).